A 201-amino-acid polypeptide reads, in one-letter code: 3-isopropylmalate dehydratase small subunit (201 aa).

Belongs to the LeuD family. LeuD type 1 subfamily. In terms of assembly, heterodimer of LeuC and LeuD.

It carries out the reaction (2R,3S)-3-isopropylmalate = (2S)-2-isopropylmalate. The protein operates within amino-acid biosynthesis; L-leucine biosynthesis; L-leucine from 3-methyl-2-oxobutanoate: step 2/4. Its function is as follows. Catalyzes the isomerization between 2-isopropylmalate and 3-isopropylmalate, via the formation of 2-isopropylmaleate. This chain is 3-isopropylmalate dehydratase small subunit, found in Rhodopseudomonas palustris (strain ATCC BAA-98 / CGA009).